A 380-amino-acid polypeptide reads, in one-letter code: Chaperone protein DnaJ (380 aa).

The 66-residue stretch at 6-71 (DYYAILEVSR…QKRAAYDQYG (66 aa)) folds into the J domain. The segment at 136-215 (GVKKDVRVIT…CHGEGTVEKE (80 aa)) adopts a CR-type zinc-finger fold. Zn(2+) is bound by residues Cys149, Cys152, Cys167, Cys170, Cys189, Cys192, Cys203, and Cys206. 4 CXXCXGXG motif repeats span residues 149–156 (CEACHGTG), 167–174 (CPSCHGAG), 189–196 (CPTCHGAG), and 203–210 (CKVCHGEG).

The protein belongs to the DnaJ family. In terms of assembly, homodimer. Zn(2+) is required as a cofactor.

The protein resides in the cytoplasm. In terms of biological role, participates actively in the response to hyperosmotic and heat shock by preventing the aggregation of stress-denatured proteins and by disaggregating proteins, also in an autonomous, DnaK-independent fashion. Unfolded proteins bind initially to DnaJ; upon interaction with the DnaJ-bound protein, DnaK hydrolyzes its bound ATP, resulting in the formation of a stable complex. GrpE releases ADP from DnaK; ATP binding to DnaK triggers the release of the substrate protein, thus completing the reaction cycle. Several rounds of ATP-dependent interactions between DnaJ, DnaK and GrpE are required for fully efficient folding. Also involved, together with DnaK and GrpE, in the DNA replication of plasmids through activation of initiation proteins. This chain is Chaperone protein DnaJ, found in Acetobacter pasteurianus (strain NBRC 105184 / IFO 3283-01).